The chain runs to 299 residues: Nucleophosmin (299 aa).

Over residues 125-134 (ESSDDEDEEH) the composition is skewed to acidic residues. A disordered region spans residues 125-247 (ESSDDEDEEH…TPKTPLSSEE (123 aa)). The Nuclear localization signal signature appears at 153–158 (PRKKTR). Residues 160–187 (EEEEEDSDEDDDDDEDDDDEDDDEEEEE) are compositionally biased toward acidic residues. Positions 188 to 197 (TPVKKTDSTK) are enriched in basic and acidic residues. The Nuclear localization signal motif lies at 189 to 195 (PVKKTDS). 4 consecutive repeats follow at residues 218 to 220 (KTP), 221 to 223 (KTP), 237 to 239 (KTP), and 240 to 242 (KTP). Residues 218 to 242 (KTPKTPEQKGKQDTKPQTPKTPKTP) form a 4 X 3 AA repeats of K-T-P region. The segment covering 221 to 231 (KTPEQKGKQDT) has biased composition (basic and acidic residues). Residues 232-242 (KPQTPKTPKTP) are compositionally biased toward low complexity.

Belongs to the nucleoplasmin family. As to quaternary structure, decamer formed by two pentameric rings associated in a head-to-head fashion. Post-translationally, phosphorylated.

The protein localises to the cytoplasm. It is found in the nucleus. Its subcellular location is the nucleoplasm. The protein resides in the nucleolus. Functionally, acts as a chaperonin for the core histones H3, H2B and H4. Associated with nucleolar ribonucleoprotein structures and bind single-stranded nucleic acids. It may function in the assembly and/or transport of ribosome. May stimulate endonuclease activity on apurinic/apyrimidinic (AP) double-stranded DNA. May inhibit endonuclease activity on AP single-stranded RNA. In Xenopus laevis (African clawed frog), this protein is Nucleophosmin (npm1).